Reading from the N-terminus, the 339-residue chain is Protein-lysine N-methyltransferase EFM3 (339 aa).

S-adenosyl-L-methionine is bound by residues Trp137 and 174 to 176 (GAG). A Phosphothreonine modification is found at Thr177. Asp199, Trp233, and Ala248 together coordinate S-adenosyl-L-methionine.

Belongs to the class I-like SAM-binding methyltransferase superfamily. EEF2KMT family.

It localises to the cytoplasm. Functionally, S-adenosyl-L-methionine-dependent protein-lysine N-methyltransferase that mono-, di- and trimethylates elongation factor 2 (EFT1/EFT2) at 'Lys-509'. The chain is Protein-lysine N-methyltransferase EFM3 from Saccharomyces cerevisiae (strain ATCC 204508 / S288c) (Baker's yeast).